The chain runs to 77 residues: Secapin (77 aa).

A signal peptide spans 1-32 (MKNYSKNATYLITVLLFSFVAMLLIIPSKCEA). A propeptide spanning residues 33 to 52 (VSNDMQPLEARTADLVQQPR) is cleaved from the precursor. The cysteines at positions 61 and 72 are disulfide-linked.

The protein belongs to the secapin family. As to expression, expressed by the venom gland.

Its subcellular location is the secreted. Its function is as follows. Nontoxic peptide. The sequence is that of Secapin from Apis cerana cerana (Oriental honeybee).